Reading from the N-terminus, the 49-residue chain is Delta-actitoxin-Axm1b (49 aa).

Residues 1-7 are well-structured region; it reads GVPCLCD. 3 cysteine pairs are disulfide-bonded: C4–C46, C6–C36, and C29–C47. Residues 8–17 are arg-14 loop (non-well-structured region); sequence SDGPRPRGNT. Residues 18–49 form a well-structured region region; the sequence is LSGILWFYPSGCPSGWHNCKAHGPNIGWCCKK.

This sequence belongs to the sea anemone sodium channel inhibitory toxin family. Type I subfamily.

The protein resides in the secreted. It localises to the nematocyst. Its function is as follows. Binds specifically to voltage-gated sodium channels (Nav) (site 3), thereby delaying their inactivation. This toxin has the highest affinity of all anemone toxins for the mammalian sodium channel, whereas its paralog Anthopleurin-A retains the greatest capacity to discriminate between cardiac (Nav1.5/SCN5A) and neuronal sodium channels. When tested electrophysiologically, this toxin exhibits a high affinity for multiple sodium channels with a 50-fold preference for rat cardiac (Nav1.5/SCN5A) over neuronal channels (0.1 nM versus 5 nM). When tested by ion flux, the affinities are similar and appear to have higher affinity (9 nM versus 22 nM). The residue Lys-37 of this toxin has been shown to interact with channel Nav1.5 (residue Asp-1612 in rat and Asp-1610 in human), which is located in the DIV S3-S4 linker (corresponding to channel site 3). Selectively modifies sodium channel inactivation from the open state with little effect on channel activation or on inactivation from closed states. Does not display phospholipid-binding activities, suggesting that the domain IV S3-S4 linker is located at the extracellular surface and not buried in the phospholipid bilayer. The protein is Delta-actitoxin-Axm1b of Anthopleura xanthogrammica (Giant green sea anemone).